A 138-amino-acid polypeptide reads, in one-letter code: Hexon-interlacing protein (138 aa).

Positions 100–127 form a coiled coil; sequence LLVLLAQLEALTQRLGELSKQVAQLREQ.

The protein belongs to the adenoviridae hexon-interlacing protein family. In terms of assembly, homotrimer. Interacts with hexon protein; this interaction tethers the hexons together. Self-interacts with adjacent proteins. Interacts with kinesin light chain KLC1; this interaction leads to capsid disruption at the nuclear pore complex during virus entry into host cell.

It localises to the virion. The protein localises to the host nucleus. Functionally, structural component of the virion that acts as a cement protein on the capsid exterior and forms triskelion structures consisting of three molecules that stabilize three hexon trimers at the center of each icosahedral facet and fixes the peripentonal hexons. Dispensable for assembly. During virus entry, recruits the anterograde motor kinesin-1 to the capsid docked at the nuclear pore complex thereby subjecting the docked capsid to a pulling force. The resulting tension leads to capsid disruption, dispersion of capsid fragments toward cell periphery and eventually viral DNA entry into the host nucleus. The chain is Hexon-interlacing protein from Human adenovirus B serotype 7 (HAdV-7).